Reading from the N-terminus, the 329-residue chain is Beta-ketoacyl-[acyl-carrier-protein] synthase III (329 aa).

Residues C112 and H253 contribute to the active site. The ACP-binding stretch occupies residues 254 to 258; that stretch reads QANQR. N283 is a catalytic residue.

This sequence belongs to the thiolase-like superfamily. FabH family. Homodimer.

Its subcellular location is the cytoplasm. It catalyses the reaction malonyl-[ACP] + acetyl-CoA + H(+) = 3-oxobutanoyl-[ACP] + CO2 + CoA. Its pathway is lipid metabolism; fatty acid biosynthesis. Functionally, catalyzes the condensation reaction of fatty acid synthesis by the addition to an acyl acceptor of two carbons from malonyl-ACP. Catalyzes the first condensation reaction which initiates fatty acid synthesis and may therefore play a role in governing the total rate of fatty acid production. Possesses both acetoacetyl-ACP synthase and acetyl transacylase activities. Its substrate specificity determines the biosynthesis of branched-chain and/or straight-chain of fatty acids. The protein is Beta-ketoacyl-[acyl-carrier-protein] synthase III of Gloeobacter violaceus (strain ATCC 29082 / PCC 7421).